The following is a 461-amino-acid chain: Kynurenine 3-monooxygenase (461 aa).

The next 2 helical transmembrane spans lie at 395–415 (TIMN…VTFS) and 432–452 (ILSR…AAGI).

Belongs to the aromatic-ring hydroxylase family. KMO subfamily. It depends on FAD as a cofactor.

The protein localises to the mitochondrion. The protein resides in the membrane. It carries out the reaction L-kynurenine + NADPH + O2 + H(+) = 3-hydroxy-L-kynurenine + NADP(+) + H2O. It functions in the pathway cofactor biosynthesis; NAD(+) biosynthesis; quinolinate from L-kynurenine: step 1/3. Functionally, catalyzes the hydroxylation of L-kynurenine (L-Kyn) to form 3-hydroxy-L-kynurenine (L-3OHKyn). Required for synthesis of quinolinic acid. This is Kynurenine 3-monooxygenase from Caenorhabditis elegans.